The primary structure comprises 574 residues: Sodium/hydrogen exchanger 8 (574 aa).

The next 11 helical transmembrane spans lie at 53-73 (MTIF…HLLI), 77-97 (LHFL…GAFI), 116-136 (PNMF…YSLH), 149-169 (LFSV…IYFL), 184-204 (FAFG…IFNA), 254-274 (LGYF…TGLI), 304-324 (GLAE…GIVM), 347-367 (VAFM…FSFP), 373-393 (SFVI…IFPL), 410-430 (MFIM…SLHL), and 444-464 (TTII…MPLI).

Belongs to the monovalent cation:proton antiporter 1 (CPA1) transporter (TC 2.A.36) family.

Its subcellular location is the golgi apparatus membrane. In terms of biological role, involved in pH regulation to eliminate acids generated by active metabolism or to counter adverse environmental conditions. Major proton extruding system driven by the inward sodium ion chemical gradient. Plays an important role in signal transduction. This Gallus gallus (Chicken) protein is Sodium/hydrogen exchanger 8.